The primary structure comprises 376 residues: DNA-directed RNA polymerase subunit alpha (376 aa).

The tract at residues 1 to 259 (MSDCSQNLLY…KHFSIFEKMD (259 aa)) is alpha N-terminal domain (alpha-NTD). Positions 276-376 (KDDILHKLVL…DKIRSKNGKG (101 aa)) are alpha C-terminal domain (alpha-CTD).

Belongs to the RNA polymerase alpha chain family. Homodimer. The RNAP catalytic core consists of 2 alpha, 1 beta, 1 beta' and 1 omega subunit. When a sigma factor is associated with the core the holoenzyme is formed, which can initiate transcription.

It catalyses the reaction RNA(n) + a ribonucleoside 5'-triphosphate = RNA(n+1) + diphosphate. In terms of biological role, DNA-dependent RNA polymerase catalyzes the transcription of DNA into RNA using the four ribonucleoside triphosphates as substrates. In Chlamydia abortus (strain DSM 27085 / S26/3) (Chlamydophila abortus), this protein is DNA-directed RNA polymerase subunit alpha.